Reading from the N-terminus, the 298-residue chain is Probable 2-(5''-triphosphoribosyl)-3'-dephosphocoenzyme-A synthase (298 aa).

The protein belongs to the CitG/MdcB family.

The catalysed reaction is 3'-dephospho-CoA + ATP = 2'-(5''-triphospho-alpha-D-ribosyl)-3'-dephospho-CoA + adenine. This Salmonella arizonae (strain ATCC BAA-731 / CDC346-86 / RSK2980) protein is Probable 2-(5''-triphosphoribosyl)-3'-dephosphocoenzyme-A synthase.